The following is a 486-amino-acid chain: Protein DETOXIFICATION 16 (486 aa).

12 helical membrane passes run 35-55 (GPLI…VMFV), 68-88 (IATS…ASAL), 117-137 (LASI…VFFG), 142-162 (IATL…AYGL), 179-199 (VVFC…VLVF), 207-227 (GAAL…FCYV), 259-279 (ALMV…SGLL), 288-308 (VLSI…GLSG), 331-351 (RVVI…LILI), 365-385 (VVSY…LDSL), 401-421 (IGAI…GLLL), and 433-453 (WLGI…VTIF).

It belongs to the multi antimicrobial extrusion (MATE) (TC 2.A.66.1) family.

The protein localises to the membrane. This chain is Protein DETOXIFICATION 16, found in Arabidopsis thaliana (Mouse-ear cress).